Reading from the N-terminus, the 211-residue chain is Outer-membrane lipoprotein carrier protein (211 aa).

Residues 1–24 (MRNRILVSACAALAMFAMQAPAHA) form the signal peptide.

The protein belongs to the LolA family. Monomer.

The protein resides in the periplasm. Its function is as follows. Participates in the translocation of lipoproteins from the inner membrane to the outer membrane. Only forms a complex with a lipoprotein if the residue after the N-terminal Cys is not an aspartate (The Asp acts as a targeting signal to indicate that the lipoprotein should stay in the inner membrane). This chain is Outer-membrane lipoprotein carrier protein, found in Cupriavidus taiwanensis (strain DSM 17343 / BCRC 17206 / CCUG 44338 / CIP 107171 / LMG 19424 / R1) (Ralstonia taiwanensis (strain LMG 19424)).